The sequence spans 414 residues: MRITVMTAGEQIITLDVDSQETVENVKALLEVESNVPIQQQQLLYNGNEMGNSDKLSALGVKDDDLLMMMVSNASSGSATSAAGNDLGMNPDGSALNPAAFQQHIRGDSNLMGQLFQNDPELAQVISGSDLNKLQDVLRARHRQRSVLQRQKEEELALLYADPFDVEAQRKIEAAIRQKGIDENWEAALEHNPEGFARVIMLYVDMEVNGVPLKAFVDSGAQSTIISKSCAERCGLLRLMDQRYKGIAHGVGQTEILGRIHVAPIKIGNNFYPCSFVVLDSPNMEFLFGLDMLRKHQCTIDLKENVMTVGGGEVSVPFLQEKDIPSRFLDEERVPNDASSSGATVPSGFTEKKNNTVANPTSQQPKRQNTSEGPEFEAKIAKLVELGFSRDSVIQALKLFEGNEEQAAGFLFGG.

Positions 1–76 constitute a Ubiquitin-like domain; sequence MRITVMTAGE…LMMMVSNASS (76 aa). One can recognise a Peptidase A2 domain in the interval 213 to 292; the sequence is LKAFVDSGAQ…NMEFLFGLDM (80 aa). Asp-218 is a catalytic residue. The disordered stretch occupies residues 332-374; that stretch reads ERVPNDASSSGATVPSGFTEKKNNTVANPTSQQPKRQNTSEGP. Residues 355–372 are compositionally biased toward polar residues; sequence NTVANPTSQQPKRQNTSE. Positions 374 to 414 constitute a UBA domain; that stretch reads PEFEAKIAKLVELGFSRDSVIQALKLFEGNEEQAAGFLFGG.

Belongs to the DDI1 family. In terms of assembly, homodimer.

It is found in the cytoplasm. Its subcellular location is the cytosol. In terms of biological role, receptor of ubiquitinated protein targeted to ubiquitin/proteasome-mediated proteolysis (UPP). Relatively weak affinity for both 'Lys-48'- and 'Lys-63'-linked ubiquitin chains with a slight preference for 'Lys-48-'linked chains of three or more ubiquitin units. The protein is Protein DNA-DAMAGE INDUCIBLE 1 of Arabidopsis thaliana (Mouse-ear cress).